A 321-amino-acid chain; its full sequence is Putative ankyrin repeat domain-containing protein 26-like protein (321 aa).

5 ANK repeats span residues 48-78 (KHLG…DLDE), 82-111 (KKRT…QLDV), 115-144 (KNRT…DPDL), 148-177 (YGNT…NIES), and 181-210 (DELT…NLTA). Disordered regions lie at residues 222-242 (EYKE…GTSN) and 268-321 (FNKP…NENI). The span at 229–242 (PRNPQNSNPEGTSN) shows a compositional bias: polar residues.

This chain is Putative ankyrin repeat domain-containing protein 26-like protein (ANKRD26P1), found in Homo sapiens (Human).